The sequence spans 767 residues: Protein hunchback (767 aa).

Disordered stretches follow at residues 30–51, 105–127, and 174–212; these read EPGHHLDGNSVASSPRQSPIPS, QQQYQQHFQAAQQQHHHHHHLMG, and EKLQALTPPMDVTPPKSPAKSSQSNIEPEKEHDQMSNSS. Positions 39-51 are enriched in polar residues; that stretch reads SVASSPRQSPIPS. Over residues 105–117 the composition is skewed to low complexity; sequence QQQYQQHFQAAQQ. Residues 200 to 212 are compositionally biased toward basic and acidic residues; it reads EPEKEHDQMSNSS. 4 C2H2-type zinc fingers span residues 242–264, 271–293, 299–321, and 327–351; these read YKCKTCGVVAITKVDFWAHTRTH, LQCPKCPFVTEFKHHLEYHIRKH, FQCDKCSYTCVNKSMLNSHRKSH, and YRCADCDYATKYCHSFKLHLRKYGH. Disordered stretches follow at residues 357–424, 518–570, and 610–704; these read LDED…TSQL, QLQQ…QPQQ, and GVMT…APPS. Gly residues predominate over residues 386 to 397; it reads IASGGSGSGSGS. Over residues 518-527 the composition is skewed to low complexity; that stretch reads QLQQQNQQQS. A compositionally biased stretch (acidic residues) spans 528 to 537; it reads DNEEEEQDDE. The segment covering 661–704 has biased composition (low complexity); the sequence is ANTSASSTASSSGNSSNASSNSNGNSSSNSSSSGTNSAAAAPPS. C2H2-type zinc fingers lie at residues 714–736 and 742–766; these read YECKYCDIFFKDAVLYTIHMGYH and FKCNMCGEKCDGPVGLFVHMARNAH.

The protein belongs to the hunchback C2H2-type zinc-finger protein family.

The protein resides in the nucleus. Gap class segmentation protein that controls development of head structures. This chain is Protein hunchback (hb), found in Drosophila orena (Fruit fly).